Here is a 212-residue protein sequence, read N- to C-terminus: Probable GH family 25 lysozyme 2 (212 aa).

A signal peptide spans 1 to 19 (MRFIALLISFFALLKVISA). The region spanning 20–212 (ISGVDISSAS…GLGFDLNWYP (193 aa)) is the Ch-type lysozyme domain. Active-site residues include Asp-24, Asp-112, and Glu-114.

It belongs to the glycosyl hydrolase 25 family.

It localises to the secreted. The catalysed reaction is Hydrolysis of (1-&gt;4)-beta-linkages between N-acetylmuramic acid and N-acetyl-D-glucosamine residues in a peptidoglycan and between N-acetyl-D-glucosamine residues in chitodextrins.. The polypeptide is Probable GH family 25 lysozyme 2 (Dictyostelium discoideum (Social amoeba)).